A 451-amino-acid chain; its full sequence is Methionine aminopeptidase 2-2 (451 aa).

A disordered region spans residues 1–101 (MAAKVADDVA…IDEVFPNDSY (101 aa)). The span at 37-51 (EHEDSDDDNEAEEGA) shows a compositional bias: acidic residues. The span at 60–73 (KKKKKRKPRKKKKA) shows a compositional bias: basic residues. His-204 is a substrate binding site. 3 residues coordinate a divalent metal cation: Asp-224, Asp-235, and His-304. His-312 provides a ligand contact to substrate. A divalent metal cation contacts are provided by Glu-337 and Glu-432.

It belongs to the peptidase M24A family. Methionine aminopeptidase eukaryotic type 2 subfamily. Co(2+) is required as a cofactor. Zn(2+) serves as cofactor. It depends on Mn(2+) as a cofactor. The cofactor is Fe(2+).

It localises to the cytoplasm. It catalyses the reaction Release of N-terminal amino acids, preferentially methionine, from peptides and arylamides.. Cotranslationally removes the N-terminal methionine from nascent proteins. The N-terminal methionine is often cleaved when the second residue in the primary sequence is small and uncharged (Met-Ala-, Cys, Gly, Pro, Ser, Thr, or Val). This is Methionine aminopeptidase 2-2 from Pyrenophora tritici-repentis (strain Pt-1C-BFP) (Wheat tan spot fungus).